Here is a 342-residue protein sequence, read N- to C-terminus: Nucleoid-associated protein Sfri_2491 (342 aa).

The protein belongs to the YejK family.

Its subcellular location is the cytoplasm. The protein localises to the nucleoid. The protein is Nucleoid-associated protein Sfri_2491 of Shewanella frigidimarina (strain NCIMB 400).